A 236-amino-acid polypeptide reads, in one-letter code: Protein-S-isoprenylcysteine O-methyltransferase (236 aa).

Helical transmembrane passes span 3–23 (NLHT…LGCV), 24–44 (FGLG…FFAF), 76–96 (AYWL…GKSF), and 108–128 (FLIN…LCLG). S-adenosyl-L-methionine-binding positions include 155–158 (HLLV), Tyr163, and 168–171 (HPSY). A helical transmembrane segment spans residues 174-194 (FFIWALGTQMLLGNFVSTLLF). Arg205 contributes to the substrate binding site. Glu209 serves as a coordination point for S-adenosyl-L-methionine.

The protein belongs to the class VI-like SAM-binding methyltransferase superfamily. Isoprenylcysteine carboxyl methyltransferase family.

The protein localises to the membrane. It carries out the reaction [protein]-C-terminal S-[(2E,6E)-farnesyl]-L-cysteine + S-adenosyl-L-methionine = [protein]-C-terminal S-[(2E,6E)-farnesyl]-L-cysteine methyl ester + S-adenosyl-L-homocysteine. Its function is as follows. Mediates C-terminal methylation of the isoprenylated C-terminal cysteine in M-factor. In Schizosaccharomyces pombe (strain 972 / ATCC 24843) (Fission yeast), this protein is Protein-S-isoprenylcysteine O-methyltransferase (mam4).